The chain runs to 430 residues: Tol-Pal system protein TolB (430 aa).

The N-terminal stretch at 1-26 (MSLMTKLGLRTLVASCLIAVGGAANA) is a signal peptide.

This sequence belongs to the TolB family. The Tol-Pal system is composed of five core proteins: the inner membrane proteins TolA, TolQ and TolR, the periplasmic protein TolB and the outer membrane protein Pal. They form a network linking the inner and outer membranes and the peptidoglycan layer.

The protein resides in the periplasm. In terms of biological role, part of the Tol-Pal system, which plays a role in outer membrane invagination during cell division and is important for maintaining outer membrane integrity. The sequence is that of Tol-Pal system protein TolB from Paraburkholderia xenovorans (strain LB400).